A 303-amino-acid chain; its full sequence is Elongation factor Ts (303 aa).

Residues 80-83 (TDFV) form an involved in Mg(2+) ion dislocation from EF-Tu region.

This sequence belongs to the EF-Ts family.

It localises to the cytoplasm. In terms of biological role, associates with the EF-Tu.GDP complex and induces the exchange of GDP to GTP. It remains bound to the aminoacyl-tRNA.EF-Tu.GTP complex up to the GTP hydrolysis stage on the ribosome. The sequence is that of Elongation factor Ts from Clostridium botulinum (strain Eklund 17B / Type B).